The chain runs to 1293 residues: MSQHLPLVAAQPGIWMAEKLSELPSAWSVAHYVELTGEVDSPLLARAVVAGLAQADTLRMRFTEDNGEVWQWVDDALTFELPEIIDLRTNIDPHGTAQALMQADLQQDLRVDSGKPLVFHQLIQVADNRWYWYQRYHHLLVDGFSFPAITRQIANIYCTWLRGEPTPASPFTPFADVVEEYQQYRESEAWQRDAAFWAEQRRQLPPPASLSPAPLPGRSASADILRLKLEFTDGEFRQLATQLSGVQRTDLALALAALWLGRLCNRMDYAAGFIFMRRLGSAALTATGPVLNVLPLGIHIAAQETLPELATRLAAQLKKMRRHQRYDAEQIVRDSGRAAGDEPLFGPVLNIKVFDYQLDIPDVQAQTHTLATGPVNDLELALFPDVHGDLSIEILANKQRYDEPTLIQHAERLKMLIAQFAADPALLCGDVDIMLPGEYAQLAQLNATQVEIPETTLSALVAEQAAKTPDAPALADARYLFSYREMREQVVALANLLRERGVKPGDSVAVALPRSVFLTLALHAIVEAGAAWLPLDTGYPDDRLKMMLEDARPSLLITTDDQLPRFSDVPNLTSLCYNAPLTPQGSAPLQLSQPHHTAYIIFTSGSTGRPKGVMVGQTAIVNRLLWMQNHYPLTGEDVVAQKTPCSFDVSVWEFFWPFIAGAKLVMAEPEAHRDPLAMQQFFAEYGVTTTHFVPSMLAAFVASLTPQTARQSCATLKQVFCSGEALPADLCREWQQLTGAPLHNLYGPTEAAVDVSWYPAFGEELAQVRGSSVPIGYPVWNTGLRILDAMMHPVPPGVAGDLYLTGIQLAQGYLGRPDLTASRFIADPFAPGERMYRTGDVARWLDNGAVEYLGRSDDQLKIRGQRIELGEIDRVMQALPDVEQAVTHACVINQAAATGGDARQLVGYLVSQSGLPLDTSALQAQLRETLPPHMVPVVLLQLPQLPLSANGKLDRKALPLPELKAQAPGRAPKAGSETIIAAAFSSLLGCDVQDADADFFALGGHSLLAMKLAAQLSRQVARQVTPGQVMVASTVAKLATIIDAEEDSTRRMGFETILPLREGNGPTLFCFHPASGFAWQFSVLSRYLDPQWSIIGIQSPRPNGPMQTAANLDEVCEAHLATLLEQQPHGPYYLLGYSLGGTLAQGIAARLRARGEQVAFLGLLDTWPPETQNWQEKEANGLDPEVLAEINREREAFLAAQQGSTSTELFTTIEGNYADAVRLLTTAHSVPFDGKATLFVAERTLQEGMSPERAWSPWIAELDIYRQDCAHVDIISPGTFEKIGPIIRATLNR.

Positions 1–301 (MSQHLPLVAA…NVLPLGIHIA (301 aa)) are elongation/condensation. The tract at residues 482 to 887 (SYREMREQVV…ALPDVEQAVT (406 aa)) is adenylatione. The 76-residue stretch at 971–1046 (APKAGSETII…KLATIIDAEE (76 aa)) folds into the Carrier domain. Residue Ser1006 is modified to O-(pantetheine 4'-phosphoryl)serine. The thioesterase stretch occupies residues 1066–1293 (PTLFCFHPAS…GPIIRATLNR (228 aa)). The Proton acceptor; for thioesterase activity role is filled by His1271.

It belongs to the ATP-dependent AMP-binding enzyme family. EntF subfamily. As to quaternary structure, proteins EntB, EntD, EntE and EntF are the component of the enterobactin synthase. Components probably do not form a stable complex. EntF acts as a catalytic monomer. Interacts with the MbtH-like protein YbdZ. YbdZ binds to the adenylation domain, but does not alter the structure of the domain. The cofactor is pantetheine 4'-phosphate. Post-translationally, 4'-phosphopantetheine is transferred from CoA to a specific serine of apo-EntF by EntD. Holo-EntF so formed is then acylated with seryl-AMP.

Its subcellular location is the cytoplasm. It catalyses the reaction 3 2,3-dihydroxybenzoate + 3 L-serine + 6 ATP = enterobactin + 6 AMP + 6 diphosphate + 4 H(+). The enzyme catalyses holo-[peptidyl-carrier protein] + L-serine + ATP = L-seryl-[peptidyl-carrier protein] + AMP + diphosphate. It participates in siderophore biosynthesis; enterobactin biosynthesis. Its activity is regulated as follows. Adenylation activity is increased in the presence of the MbtH-like protein YbdZ. Involved in the biosynthesis of the siderophore enterobactin (enterochelin), which is a macrocyclic trimeric lactone of N-(2,3-dihydroxybenzoyl)-serine. EntF catalyzes the activation of L-serine via ATP-dependent PPi exchange reaction to form seryladenylate. Activated L-serine is loaded onto the peptidyl carrier domain via a thioester linkage to the phosphopanthetheine moiety, forming seryl-S-Ppant-EntF. EntF acts then as the sole catalyst for the formation of the three amide and three ester linkages found in enterobactin, using seryladenylate and 2,3-dihydroxybenzoate-S-Ppant-EntB (DHB-S-Ppant-EntB) as substrates, via the formation of a DHB-Ser-S-Ppant-EntF intermediate. In Escherichia coli (strain K12), this protein is Enterobactin synthase component F.